We begin with the raw amino-acid sequence, 290 residues long: L-proline cis-3-hydroxylase 1 (290 aa).

Residues His-107, Asp-109, and His-158 each coordinate Fe cation. 2-oxoglutarate is bound at residue Arg-168.

The protein belongs to the L-proline cis-4-/cis-3-hydroxylase family. As to quaternary structure, homodimer. Fe(2+) is required as a cofactor.

The enzyme catalyses L-proline + 2-oxoglutarate + O2 = cis-3-hydroxy-L-proline + succinate + CO2. Its activity is regulated as follows. Inhibited by metal ions such as Co(2+), Zn(2+), Ni(2+) or Cu(2+). Is also inhibited by EDTA in vitro. Unlike the procollagen-proline cis-3- and trans-4-hydroxylases from mammals, does not necessarily require L-ascorbate for activity although it does increase the activity of the enzyme. Dioxygenase that catalyzes the 2-oxoglutarate-dependent selective hydroxylation of free L-proline to cis-3-hydroxy-L-proline (cis-3-Hyp). D-proline, trans-4-hydroxy-L-proline, cis-4-hydroxy-L-proline, cis-4-hydroxy-D-proline, and 3,4-dehydro-DL-proline are not substrates. The protein is L-proline cis-3-hydroxylase 1 of Streptomyces sp.